The chain runs to 605 residues: DNA primase (605 aa).

The CHC2-type zinc-finger motif lies at 38–62; sequence CPFHDEKTPSFTVSEDKQICHCFGC. Residues 260–341 form the Toprim domain; sequence DEIVLLEGFM…NVFVIQLPSG (82 aa). Mg(2+) is bound by residues Glu-266, Asp-310, and Asp-312.

It belongs to the DnaG primase family. In terms of assembly, monomer. Interacts with DnaB. The cofactor is Zn(2+). Requires Mg(2+) as cofactor.

It catalyses the reaction ssDNA + n NTP = ssDNA/pppN(pN)n-1 hybrid + (n-1) diphosphate.. In terms of biological role, RNA polymerase that catalyzes the synthesis of short RNA molecules used as primers for DNA polymerase during DNA replication. The protein is DNA primase of Staphylococcus aureus (strain MW2).